The primary structure comprises 390 residues: Sulfate adenylyltransferase (390 aa).

It belongs to the sulfate adenylyltransferase family.

It carries out the reaction sulfate + ATP + H(+) = adenosine 5'-phosphosulfate + diphosphate. It participates in sulfur metabolism; hydrogen sulfide biosynthesis; sulfite from sulfate: step 1/3. The chain is Sulfate adenylyltransferase (sat) from Synechocystis sp. (strain ATCC 27184 / PCC 6803 / Kazusa).